Consider the following 100-residue polypeptide: uncharacterized protein (100 aa).

It localises to the virion. This is an uncharacterized protein from Acanthamoeba polyphaga mimivirus (APMV).